Reading from the N-terminus, the 504-residue chain is uncharacterized protein (504 aa).

A helical membrane pass occupies residues 26–46 (ILFLLLGLIILVNISINVTTV). Positions 103–112 (PTQCSSSSTH) are enriched in polar residues. Disordered stretches follow at residues 103–180 (PTQC…TRPM), 313–402 (YDAR…PLTT), and 431–504 (QRLA…GKLN). Over residues 113-128 (YFRKHSNDRRSRRRYC) the composition is skewed to basic residues. Polar residues predominate over residues 135-147 (QIRQSNQQQSCHS). Residues 313–324 (YDARDQWRRGTE) are compositionally biased toward basic and acidic residues. Over residues 349 to 377 (SSQAHRQNFPSYTHSQPNHSPPQSVGYSS) the composition is skewed to polar residues. 2 stretches are compositionally biased toward basic and acidic residues: residues 378 to 389 (RESHEVRRRAPD) and 467 to 478 (LELKRQVQENRG). The segment covering 494–504 (SLHRSRTGKLN) has biased composition (basic residues).

The protein localises to the membrane. This is an uncharacterized protein from Rattus norvegicus (Rat).